The sequence spans 484 residues: MTQWEVVIGIETHAQLSTVSKIFSGASTAFGAEPNTQACAVDLALPGVLPVLNKKAVECAIRFGLAIGAEVAQKSVFARKNYFYPDLPKGYQISQMDLPVVVGGNITLQVGQGDKAYEKIVRLTRAHLEEDAGKSLHEDFHGKSGIDLNRAGTPLLEIVSEPDMRSSDEAVAYARALHALVRWIGICDGNMQEGSFRCDANVSVRPKGQAEFGTRREIKNLNSFRFMKEAIDFEVQWQINEIEEGRKIQQATVLFDPDTGETRMMRSKEDAHDYRYFPDPDLLPLMIPAEWIARVQGEMPELPVQRRERFAGDLGLSAYDASALTASQEIADYFEAVVAIAGKANAKPCANWVMVDLAARLNKDGKDIADSPVSAAQLAGLIQRIADSTISNNIAKKVFEALWNGEGATADEVIDKQGLKQITDTGAIEALVDEVLAANAANVAEFKAGKEKAFNALVGQVMKAAKGKANPQQVNDLLKQKLAG.

This sequence belongs to the GatB/GatE family. GatB subfamily. In terms of assembly, heterotrimer of A, B and C subunits.

The catalysed reaction is L-glutamyl-tRNA(Gln) + L-glutamine + ATP + H2O = L-glutaminyl-tRNA(Gln) + L-glutamate + ADP + phosphate + H(+). The enzyme catalyses L-aspartyl-tRNA(Asn) + L-glutamine + ATP + H2O = L-asparaginyl-tRNA(Asn) + L-glutamate + ADP + phosphate + 2 H(+). In terms of biological role, allows the formation of correctly charged Asn-tRNA(Asn) or Gln-tRNA(Gln) through the transamidation of misacylated Asp-tRNA(Asn) or Glu-tRNA(Gln) in organisms which lack either or both of asparaginyl-tRNA or glutaminyl-tRNA synthetases. The reaction takes place in the presence of glutamine and ATP through an activated phospho-Asp-tRNA(Asn) or phospho-Glu-tRNA(Gln). In Dechloromonas aromatica (strain RCB), this protein is Aspartyl/glutamyl-tRNA(Asn/Gln) amidotransferase subunit B.